The sequence spans 1377 residues: Carboxypeptidase D (1377 aa).

The first 37 residues, 1–37 (MASGRDERPPWRLGRLRLLPPPPLLLLLLLLRSSAQA), serve as a signal peptide directing secretion. Topologically, residues 38 to 1296 (AHIKKAEATT…DNRIFGLPRE (1259 aa)) are extracellular. The 318-residue stretch at 62 to 379 (HYYHEAALGE…ESLITLIEKV (318 aa)) folds into the Peptidase M14 1 domain. Zn(2+) is bound by residues His-138 and Glu-141. The short motif at 161–163 (RGD) is the Cell attachment site element. 2 N-linked (GlcNAc...) asparagine glycosylation sites follow: Asn-171 and Asn-216. The disordered stretch occupies residues 188 to 231 (RAREGDCGLGDSGPPGTSGRDNSRGRDLNRSFPDQFSTGEPPSL). A Zn(2+)-binding site is contributed by His-256. Tyr-264 bears the Phosphotyrosine mark. Residue Ser-269 is modified to Phosphoserine. Glu-349 serves as the catalytic Proton donor/acceptor. N-linked (GlcNAc...) asparagine glycans are attached at residues Asn-398, Asn-409, Asn-428, and Asn-521. The Peptidase M14 2 domain occupies 501–791 (HHHHFPDMEI…RSLIQFMKQV (291 aa)). 2 residues coordinate Zn(2+): His-563 and Glu-566. A glycan (N-linked (GlcNAc...) asparagine) is linked at Asn-625. His-670 is a binding site for Zn(2+). The Proton donor/acceptor role is filled by Glu-761. 6 N-linked (GlcNAc...) asparagine glycosylation sites follow: Asn-810, Asn-854, Asn-866, Asn-878, Asn-952, and Asn-975. Residues 874–898 (ADANNESKKGRGHSTSTDDTSDPTS) are disordered. The 280-residue stretch at 929-1208 (RYHSYKDLSE…KSLLSMLVEV (280 aa)) folds into the Peptidase M14 3 domain. A compositionally biased stretch (basic and acidic residues) spans 1038 to 1047 (RERAQEKDCT). The tract at residues 1038 to 1064 (RERAQEKDCTSKTGHTNAHGKDLDTDF) is disordered. N-linked (GlcNAc...) asparagine glycosylation is found at Asn-1067 and Asn-1139. The chain crosses the membrane as a helical span at residues 1297-1317 (LVVTVSGATMSALILTACIIW). 3 S-palmitoyl cysteine lipidation sites follow: Cys-1314, Cys-1318, and Cys-1320. The Cytoplasmic segment spans residues 1318-1377 (CICSIKSNRHKDGFHRLRQHHDEYEDEIRMMSTGSKKSLLSHEFQDETDTEEETLYSSKH). A phosphoserine mark is found at Ser-1355 and Ser-1358. Positions 1356–1377 (LLSHEFQDETDTEEETLYSSKH) are disordered. A phosphothreonine mark is found at Thr-1365 and Thr-1367.

It belongs to the peptidase M14 family. The cofactor is Zn(2+).

Its subcellular location is the cell membrane. It carries out the reaction Releases C-terminal Arg and Lys from polypeptides.. This Mus musculus (Mouse) protein is Carboxypeptidase D (Cpd).